The chain runs to 243 residues: MSTDMGTADVGEVDPEAPQPTNIEVHIHQESVLAKLLLAGCSFLRVPASASTQSQGSSRVLVASWVVQIVLGILSVVLGGILYICHYLAMNTQGAPFWTGIVAMLAGAVAFLQKKRGGTCWALMRILLVLASFCTAVAAIVIGSREFNNYWYYLRDDVCKSDTSYRWSTMPSITPVPEEANRIGLCKYYTSMLKTLLISLQAMLLGVWVLLLLASLIPVCVYLWKRFFTKAETEKKLLGAAVI.

The residue at position 42 (S42) is a Phosphoserine. Transmembrane regions (helical) follow at residues 65–85, 92–112, 122–142, and 204–224; these read WVVQ…LYIC, TQGA…VAFL, ALMR…AIVI, and LLGV…VYLW.

This sequence belongs to the TMEM176 family. Interacts with MCOLN2.

The protein localises to the membrane. In Rattus norvegicus (Rat), this protein is Transmembrane protein 176A (Tmem176a).